The chain runs to 69 residues: Cytochrome c oxidase subunit 8A, mitochondrial (69 aa).

The transit peptide at 1-25 (MSSLTPLLLRSLTGPARRLMVPRAQ) directs the protein to the mitochondrion. Residues 2 to 19 (SSLTPLLLRSLTGPARRL) carry the SIFI-degron motif. Residues 26 to 36 (VHSKPPREQLG) are Mitochondrial matrix-facing. The chain crosses the membrane as a helical span at residues 37-60 (VLDITIGLTSCFVCCLLPAGWVLS). The Mitochondrial intermembrane segment spans residues 61–69 (HLESYKKRE).

The protein belongs to the cytochrome c oxidase VIII family. Component of the cytochrome c oxidase (complex IV, CIV), a multisubunit enzyme composed of 14 subunits. The complex is composed of a catalytic core of 3 subunits MT-CO1, MT-CO2 and MT-CO3, encoded in the mitochondrial DNA, and 11 supernumerary subunits COX4I, COX5A, COX5B, COX6A, COX6B, COX6C, COX7A, COX7B, COX7C, COX8 and NDUFA4, which are encoded in the nuclear genome. The complex exists as a monomer or a dimer and forms supercomplexes (SCs) in the inner mitochondrial membrane with NADH-ubiquinone oxidoreductase (complex I, CI) and ubiquinol-cytochrome c oxidoreductase (cytochrome b-c1 complex, complex III, CIII), resulting in different assemblies (supercomplex SCI(1)III(2)IV(1) and megacomplex MCI(2)III(2)IV(2)). In terms of processing, in response to mitochondrial stress, the precursor protein is ubiquitinated by the SIFI complex in the cytoplasm before mitochondrial import, leading to its degradation. Within the SIFI complex, UBR4 initiates ubiquitin chain that are further elongated or branched by KCMF1.

Its subcellular location is the mitochondrion inner membrane. Its pathway is energy metabolism; oxidative phosphorylation. In terms of biological role, component of the cytochrome c oxidase, the last enzyme in the mitochondrial electron transport chain which drives oxidative phosphorylation. The respiratory chain contains 3 multisubunit complexes succinate dehydrogenase (complex II, CII), ubiquinol-cytochrome c oxidoreductase (cytochrome b-c1 complex, complex III, CIII) and cytochrome c oxidase (complex IV, CIV), that cooperate to transfer electrons derived from NADH and succinate to molecular oxygen, creating an electrochemical gradient over the inner membrane that drives transmembrane transport and the ATP synthase. Cytochrome c oxidase is the component of the respiratory chain that catalyzes the reduction of oxygen to water. Electrons originating from reduced cytochrome c in the intermembrane space (IMS) are transferred via the dinuclear copper A center (CU(A)) of subunit 2 and heme A of subunit 1 to the active site in subunit 1, a binuclear center (BNC) formed by heme A3 and copper B (CU(B)). The BNC reduces molecular oxygen to 2 water molecules using 4 electrons from cytochrome c in the IMS and 4 protons from the mitochondrial matrix. The sequence is that of Cytochrome c oxidase subunit 8A, mitochondrial (Cox8a) from Rattus norvegicus (Rat).